The primary structure comprises 211 residues: Small ribosomal subunit protein uS3 (211 aa).

In terms of domain architecture, KH type-2 spans 16-85 (IDEYFKGKLV…NPQIEVKPLE (70 aa)).

The protein belongs to the universal ribosomal protein uS3 family. As to quaternary structure, part of the 30S ribosomal subunit.

In terms of biological role, binds the lower part of the 30S subunit head. In Methanococcus vannielii (strain ATCC 35089 / DSM 1224 / JCM 13029 / OCM 148 / SB), this protein is Small ribosomal subunit protein uS3.